Consider the following 220-residue polypeptide: Ribose-5-phosphate isomerase A (220 aa).

Substrate contacts are provided by residues Thr-28–Thr-31, Asp-81–Asp-84, and Lys-94–Gly-97. The active-site Proton acceptor is Glu-103. Lys-121 lines the substrate pocket.

The protein belongs to the ribose 5-phosphate isomerase family. Homodimer.

The enzyme catalyses aldehydo-D-ribose 5-phosphate = D-ribulose 5-phosphate. It participates in carbohydrate degradation; pentose phosphate pathway; D-ribose 5-phosphate from D-ribulose 5-phosphate (non-oxidative stage): step 1/1. In terms of biological role, catalyzes the reversible conversion of ribose-5-phosphate to ribulose 5-phosphate. In Hydrogenovibrio crunogenus (strain DSM 25203 / XCL-2) (Thiomicrospira crunogena), this protein is Ribose-5-phosphate isomerase A.